Here is a 168-residue protein sequence, read N- to C-terminus: Transcription antitermination protein NusB (168 aa).

Residues 147–168 (RGLINNSSRNTSRSEEKHSTEK) form a disordered region. Over residues 158 to 168 (SRSEEKHSTEK) the composition is skewed to basic and acidic residues.

This sequence belongs to the NusB family.

Its function is as follows. Involved in transcription antitermination. Required for transcription of ribosomal RNA (rRNA) genes. Binds specifically to the boxA antiterminator sequence of the ribosomal RNA (rrn) operons. This is Transcription antitermination protein NusB from Chlorobium phaeobacteroides (strain BS1).